Consider the following 262-residue polypeptide: ATP synthase subunit a (262 aa).

6 helical membrane-spanning segments follow: residues 32 to 52 (IAFT…AVFV), 98 to 118 (LFMF…VLGI), 127 to 147 (FTIT…VGFW), 153 to 173 (FFSL…IFPI), 189 to 209 (LFVA…FVID), and 219 to 239 (LLVG…EILV).

It belongs to the ATPase A chain family. F-type ATPases have 2 components, CF(1) - the catalytic core - and CF(0) - the membrane proton channel. CF(1) has five subunits: alpha(3), beta(3), gamma(1), delta(1), epsilon(1). CF(0) has four main subunits: a, b, b' and c.

The protein resides in the cell inner membrane. Its function is as follows. Key component of the proton channel; it plays a direct role in the translocation of protons across the membrane. The sequence is that of ATP synthase subunit a from Erythrobacter litoralis (strain HTCC2594).